The sequence spans 432 residues: Cyclic 2,3-diphosphoglycerate synthetase (432 aa).

It belongs to the cyclic 2,3-diphosphoglycerate synthetase family.

The protein localises to the cytoplasm. The catalysed reaction is (2R)-2,3-bisphosphoglycerate + ATP + H(+) = cyclic (2R)-2,3-bisphosphoglycerate + ADP + phosphate. In terms of biological role, catalyzes the formation of cyclic 2,3-diphosphoglycerate (cDPG) by formation of an intramolecular phosphoanhydride bond at the expense of ATP. In Thermococcus onnurineus (strain NA1), this protein is Cyclic 2,3-diphosphoglycerate synthetase.